A 395-amino-acid polypeptide reads, in one-letter code: Endophilin-B2 (395 aa).

Met-1 is subject to N-acetylmethionine. The interval Met-1 to Phe-27 is membrane-binding amphipathic helix. Ser-10 carries the phosphoserine modification. The region spanning Glu-24–Gly-287 is the BAR domain. Coiled coils occupy residues Ile-116–Phe-132 and Ala-206–Glu-240. One can recognise an SH3 domain in the interval Ser-335–Ser-395. Ser-395 carries the post-translational modification Phosphoserine.

The protein belongs to the endophilin family. In terms of assembly, homodimer, and heterodimer with SH3GLB1. In terms of tissue distribution, detected in skeletal muscle, adipocyte, brain, lung, colon and mammary gland.

The protein localises to the cytoplasm. This is Endophilin-B2 (SH3GLB2) from Homo sapiens (Human).